The chain runs to 156 residues: Succinate dehydrogenase assembly factor 2-B, mitochondrial (156 aa).

The transit peptide at 1-24 directs the protein to the mitochondrion; sequence MLRQLIVSTVGRRMPLQMISQSRL.

The protein belongs to the SDHAF2 family. In terms of assembly, interacts with the flavoprotein subunit within the SDH catalytic dimer.

The protein resides in the mitochondrion matrix. Plays an essential role in the assembly of succinate dehydrogenase (SDH), an enzyme complex (also referred to as respiratory complex II) that is a component of both the tricarboxylic acid (TCA) cycle and the mitochondrial electron transport chain, and which couples the oxidation of succinate to fumarate with the reduction of ubiquinone (coenzyme Q) to ubiquinol. Required for flavinylation (covalent attachment of FAD) of the flavoprotein subunit of the SDH catalytic dimer. In Drosophila erecta (Fruit fly), this protein is Succinate dehydrogenase assembly factor 2-B, mitochondrial.